Here is a 448-residue protein sequence, read N- to C-terminus: Neurexin-1b-beta (448 aa).

Residues 1 to 38 form the signal peptide; it reads MFGGWRLVVWQIFSEIITRRLGFWICLYFAALSVGMIS. Residues 39–375 are Extracellular-facing; the sequence is GSEPLVRTRH…EVFRESNGTT (337 aa). The 199-residue stretch at 71–269 folds into the Laminin G-like domain; sequence STYVFGRQGG…DPNVRMEGSV (199 aa). The chain crosses the membrane as a helical span at residues 376-396; sequence GMVVGIVAGAALCILILLYAM. At 397–448 the chain is on the cytoplasmic side; that stretch reads YKYRNRDEGSYHVDESRNYICNSNGAALKEKNTADDDSGSKSKKNKNKEYYV. The span at 426-436 shows a compositional bias: basic and acidic residues; sequence EKNTADDDSGS. The interval 426–448 is disordered; sequence EKNTADDDSGSKSKKNKNKEYYV.

It belongs to the neurexin family.

Its subcellular location is the membrane. In terms of biological role, neuronal cell surface protein that may be involved in cell recognition and cell adhesion. May play a role in formation or maintenance of synaptic junctions. The chain is Neurexin-1b-beta (nrxn1b) from Danio rerio (Zebrafish).